The following is a 176-amino-acid chain: NAD(P)H-quinone oxidoreductase subunit J (176 aa).

Belongs to the complex I 30 kDa subunit family. In terms of assembly, NDH-1 can be composed of about 15 different subunits; different subcomplexes with different compositions have been identified which probably have different functions.

The protein resides in the cell inner membrane. The enzyme catalyses a plastoquinone + NADH + (n+1) H(+)(in) = a plastoquinol + NAD(+) + n H(+)(out). The catalysed reaction is a plastoquinone + NADPH + (n+1) H(+)(in) = a plastoquinol + NADP(+) + n H(+)(out). Functionally, NDH-1 shuttles electrons from an unknown electron donor, via FMN and iron-sulfur (Fe-S) centers, to quinones in the respiratory and/or the photosynthetic chain. The immediate electron acceptor for the enzyme in this species is believed to be plastoquinone. Couples the redox reaction to proton translocation, and thus conserves the redox energy in a proton gradient. Cyanobacterial NDH-1 also plays a role in inorganic carbon-concentration. The sequence is that of NAD(P)H-quinone oxidoreductase subunit J from Gloeobacter violaceus (strain ATCC 29082 / PCC 7421).